Reading from the N-terminus, the 130-residue chain is Small ribosomal subunit protein uS8 (130 aa).

It belongs to the universal ribosomal protein uS8 family. In terms of assembly, part of the 30S ribosomal subunit.

One of the primary rRNA binding proteins, it binds directly to 16S rRNA central domain where it helps coordinate assembly of the platform of the 30S subunit. This chain is Small ribosomal subunit protein uS8, found in Cenarchaeum symbiosum (strain A).